Reading from the N-terminus, the 674-residue chain is Multifunctional alkene reductase/demethylase OYE (674 aa).

FMN-binding residues include G62 and Q105. H175 acts as the Proton donor in catalysis. R223 and K299 together coordinate FMN. [4Fe-4S] cluster-binding residues include C345, C351, and C358. FAD contacts are provided by A391, Q418, and R428.

The protein in the N-terminal section; belongs to the NADH:flavin oxidoreductase/NADH oxidase family. It depends on [4Fe-4S] cluster as a cofactor. The cofactor is FAD. Requires FMN as cofactor.

It carries out the reaction 3-phenylpropanoate + NAD(+) = (E)-cinnamate + NADH + H(+). The catalysed reaction is N-methyl-L-proline + NAD(+) + H2O = L-proline + formaldehyde + NADH + H(+). In terms of biological role, a member of the 2-enoate reductase subfamily of old yellow enzymes (OYE) able to reduce alpha/beta alkenes near electron-withdrawing groups as well as perform oxidative demethylation chemistry. Prefers NADH over NADPH as cosubstrate. May play a role in osmotic stress response in situ. In Caballeronia cordobensis (Burkholderia cordobensis), this protein is Multifunctional alkene reductase/demethylase OYE.